Consider the following 450-residue polypeptide: Probable glycylpeptide N-tetradecanoyltransferase (450 aa).

The tract at residues 1 to 28 (MSHGHSHDGAPCGGHHGDDGAGGSRPSV) is disordered. Gln67, Phe68, Trp69, Phe200, Leu201, Cys202, Val203, Ser209, Arg211, Val212, and Ala213 together coordinate tetradecanoyl-CoA.

The protein belongs to the NMT family.

The protein localises to the cytoplasm. The enzyme catalyses N-terminal glycyl-[protein] + tetradecanoyl-CoA = N-tetradecanoylglycyl-[protein] + CoA + H(+). Adds a myristoyl group to the N-terminal glycine residue of certain cellular proteins. This is Probable glycylpeptide N-tetradecanoyltransferase (nmt-1) from Caenorhabditis elegans.